The sequence spans 189 residues: UPF0301 protein RAF_ORF0041 (189 aa).

The protein belongs to the UPF0301 (AlgH) family.

The sequence is that of UPF0301 protein RAF_ORF0041 from Rickettsia africae (strain ESF-5).